The chain runs to 336 residues: Vacuolar protein sorting-associated protein 26B (336 aa).

A phosphoserine mark is found at S302, S304, and S319.

Belongs to the VPS26 family. As to quaternary structure, component of the heterotrimeric retromer cargo-selective complex (CSC), also described as vacuolar protein sorting subcomplex (VPS), formed by VPS26 (VPS26A or VPS26B), VPS29 and VPS35. The CSC has a highly elongated structure with VPS26 and VPS29 binding independently at opposite distal ends of VPS35 as central platform. The CSC is believed to associate with variable sorting nexins to form functionally distinct retromer complex variants. The originally described SNX-BAR retromer is a pentamer containing the CSC and a heterodimeric membrane-deforming subcomplex formed between SNX1 or SNX2 and SNX5 or SNX6 (also called SNX-BAR subcomplex); the respective CSC and SNX-BAR subcomplexes associate with low affinity. The CSC associates with SNX3 to form a SNX3-retromer complex. The CSC associates with SNX27, the WASH complex and the SNX-BAR subcomplex to form the SNX27-retromer complex. Interacts with VPS29, VPS35, TBC1D5, GOLPH3, SNX27.

The protein resides in the cytoplasm. Its subcellular location is the membrane. The protein localises to the early endosome. It is found in the late endosome. Functionally, acts as a component of the retromer cargo-selective complex (CSC). The CSC is believed to be the core functional component of retromer or respective retromer complex variants acting to prevent missorting of selected transmembrane cargo proteins into the lysosomal degradation pathway. The recruitment of the CSC to the endosomal membrane involves RAB7A and SNX3. The SNX-BAR retromer mediates retrograde transport of cargo proteins from endosomes to the trans-Golgi network (TGN) and is involved in endosome-to-plasma membrane transport for cargo protein recycling. The SNX3-retromer mediates the retrograde transport of WLS distinct from the SNX-BAR retromer pathway. The SNX27-retromer is believed to be involved in endosome-to-plasma membrane trafficking and recycling of a broad spectrum of cargo proteins. The CSC seems to act as recruitment hub for other proteins, such as the WASH complex and TBC1D5. May be involved in retrograde transport of SORT1 but not of IGF2R. Acts redundantly with VSP26A in SNX-27 mediated endocytic recycling of SLC2A1/GLUT1. This is Vacuolar protein sorting-associated protein 26B (VPS26B) from Pongo abelii (Sumatran orangutan).